We begin with the raw amino-acid sequence, 274 residues long: MSDIIKEIEEAWQIKENILNDSLKLIKLKSILNESIKSLNQGIIRVCEKQGNQWKVNEWVKKAILLYFITTESQLYNNNYNSWYDKVAPKFPADTDKNIFKEAAIRKVPGAIVRTGTYIAKNVVIMPSFINIGAYIDEGTMIDTWATIGSCAQIGKNCHISGGSGIGGVLEPLQAKPVIIEDNCFVGARSEIAEGIIVEEGSVISMGVFIGSSTKIVYRDTGKIIYGRIPAYSVVVPGVLPSPEAGKPGLYCVVIVKQVDKTTRAKVSINDLLR.

Substrate-binding residues include Arg106 and Asp143.

Belongs to the transferase hexapeptide repeat family. In terms of assembly, homotrimer.

The protein resides in the cytoplasm. The enzyme catalyses (S)-2,3,4,5-tetrahydrodipicolinate + succinyl-CoA + H2O = (S)-2-succinylamino-6-oxoheptanedioate + CoA. It functions in the pathway amino-acid biosynthesis; L-lysine biosynthesis via DAP pathway; LL-2,6-diaminopimelate from (S)-tetrahydrodipicolinate (succinylase route): step 1/3. The polypeptide is 2,3,4,5-tetrahydropyridine-2,6-dicarboxylate N-succinyltransferase (Rickettsia typhi (strain ATCC VR-144 / Wilmington)).